We begin with the raw amino-acid sequence, 406 residues long: Succinylornithine transaminase (406 aa).

Lysine 252 carries the N6-(pyridoxal phosphate)lysine modification.

It belongs to the class-III pyridoxal-phosphate-dependent aminotransferase family. AstC subfamily. Pyridoxal 5'-phosphate serves as cofactor.

The catalysed reaction is N(2)-succinyl-L-ornithine + 2-oxoglutarate = N-succinyl-L-glutamate 5-semialdehyde + L-glutamate. It participates in amino-acid degradation; L-arginine degradation via AST pathway; L-glutamate and succinate from L-arginine: step 3/5. Functionally, catalyzes the transamination of N(2)-succinylornithine and alpha-ketoglutarate into N(2)-succinylglutamate semialdehyde and glutamate. Can also act as an acetylornithine aminotransferase. This chain is Succinylornithine transaminase, found in Escherichia coli O139:H28 (strain E24377A / ETEC).